Here is a 567-residue protein sequence, read N- to C-terminus: ATP-dependent RNA helicase HAS1 (567 aa).

The tract at residues M1 to G109 is disordered. Residues E30 to D40 show a composition bias toward acidic residues. Positions E35–Y88 form a coiled coil. The Q motif signature appears at D103 to A131. The 177-residue stretch at I134–Y310 folds into the Helicase ATP-binding domain. A147 to T154 serves as a coordination point for ATP. The short motif at D257–D260 is the DEAD box element. The Helicase C-terminal domain maps to G324–V484.

Belongs to the DEAD box helicase family. DDX18/HAS1 subfamily. Associates in the nucleolus with the 60S and pre-60S ribosomal subunits.

Its subcellular location is the nucleus. The protein resides in the nucleolus. It catalyses the reaction ATP + H2O = ADP + phosphate + H(+). ATP-dependent RNA helicase involved in 40S ribosomal subunit biogenesis. Required for the processing and cleavage of 35S pre-rRNA at sites A0, A1, and A2, leading to mature 18S rRNA. In Scheffersomyces stipitis (strain ATCC 58785 / CBS 6054 / NBRC 10063 / NRRL Y-11545) (Yeast), this protein is ATP-dependent RNA helicase HAS1 (HAS1).